A 321-amino-acid chain; its full sequence is Cytoskeleton protein RodZ (321 aa).

Residues 1 to 111 are Cytoplasmic-facing; it reads MNTEATHDQN…LGKRRKKRDG (111 aa). Residues 19–71 form the HTH cro/C1-type domain; sequence LRNAREQLGLSQQAVAERLCLKVSTVRDIEEDKAPSDLASTFLRGYIRSYARL. Positions 30–49 form a DNA-binding region, H-T-H motif; sequence QQAVAERLCLKVSTVRDIEE. Residues 112-132 traverse the membrane as a helical; Signal-anchor for type II membrane protein segment; the sequence is WLMSFTWLVLFVVVGLTGAWW. The Periplasmic segment spans residues 133–321; it reads WQNHKAQQEE…TINAEPTSAQ (189 aa). The tract at residues 167-190 is disordered; that stretch reads DTRAAASQDTTPAETAPAAPVDST. Residues 176–190 show a composition bias toward low complexity; it reads TTPAETAPAAPVDST.

Belongs to the RodZ family.

Its subcellular location is the cell inner membrane. Its function is as follows. Cytoskeletal protein that is involved in cell-shape control through regulation of the length of the long axis. This chain is Cytoskeleton protein RodZ, found in Salmonella arizonae (strain ATCC BAA-731 / CDC346-86 / RSK2980).